The primary structure comprises 190 residues: MFLQVTGTATPAMPAVVFLNSWRRPLSIPLRSVKTFKPLAFFDLKGGKGMSEFHEVELKVRDYELDQFGVVNNAVYANYCQHGRHEFLESIGINCDEVARSGEALAISELTMKFLSPLRSGDKFVVKARISGTSAARIYFDHFIFKLPNQEPILEAKGIAVWLDNKYRPVRIPSSIRSKFVHFLRQDDAV.

The transit peptide at 1–49 directs the protein to the chloroplast; that stretch reads MFLQVTGTATPAMPAVVFLNSWRRPLSIPLRSVKTFKPLAFFDLKGGKG. The active site involves D66.

It belongs to the 4-hydroxybenzoyl-CoA thioesterase family. Highly expressed in stems and flowers and at lower levels in rosette leaves, cauline leaves and siliques.

It is found in the plastid. It localises to the chloroplast. In terms of biological role, acyl-ACP thioesterase involved in the production of fatty acids and beta-keto fatty acids. Can produce fatty acids of long chain (14:1 and 16:1) and beta-keto fatty acids of medium to long chain (8:0, 10:0, 12:0, 12:1, 14:0 and 16:0) when expressed in a heterologous organism (E.coli). Possesses thioesterase activity for lauroyl-ACP (12:0-ACP) in vitro. May play a role in the generation of long fatty acids in the chloroplast. The protein is Acyl-acyl carrier protein thioesterase ATL3, chloroplastic of Arabidopsis thaliana (Mouse-ear cress).